Consider the following 283-residue polypeptide: Elongation factor Ts (283 aa).

Residues threonine 80–valine 83 form an involved in Mg(2+) ion dislocation from EF-Tu region.

The protein belongs to the EF-Ts family.

It localises to the cytoplasm. Its function is as follows. Associates with the EF-Tu.GDP complex and induces the exchange of GDP to GTP. It remains bound to the aminoacyl-tRNA.EF-Tu.GTP complex up to the GTP hydrolysis stage on the ribosome. This chain is Elongation factor Ts, found in Salmonella agona (strain SL483).